Here is a 328-residue protein sequence, read N- to C-terminus: Aspartate carbamoyltransferase catalytic subunit (328 aa).

Carbamoyl phosphate is bound by residues R55 and T56. K83 contributes to the L-aspartate binding site. 3 residues coordinate carbamoyl phosphate: R105, H135, and Q138. Residues R176 and R230 each coordinate L-aspartate. Carbamoyl phosphate-binding residues include G271 and P272.

It belongs to the aspartate/ornithine carbamoyltransferase superfamily. ATCase family. In terms of assembly, heterododecamer (2C3:3R2) of six catalytic PyrB chains organized as two trimers (C3), and six regulatory PyrI chains organized as three dimers (R2).

It catalyses the reaction carbamoyl phosphate + L-aspartate = N-carbamoyl-L-aspartate + phosphate + H(+). Its pathway is pyrimidine metabolism; UMP biosynthesis via de novo pathway; (S)-dihydroorotate from bicarbonate: step 2/3. Functionally, catalyzes the condensation of carbamoyl phosphate and aspartate to form carbamoyl aspartate and inorganic phosphate, the committed step in the de novo pyrimidine nucleotide biosynthesis pathway. This is Aspartate carbamoyltransferase catalytic subunit from Streptomyces griseus subsp. griseus (strain JCM 4626 / CBS 651.72 / NBRC 13350 / KCC S-0626 / ISP 5235).